Reading from the N-terminus, the 226-residue chain is NADH-quinone oxidoreductase subunit C (226 aa).

A disordered region spans residues 1 to 21 (MTEPTGDQTPEIIGVRRGMFG).

It belongs to the complex I 30 kDa subunit family. As to quaternary structure, NDH-1 is composed of 14 different subunits. Subunits NuoB, C, D, E, F, and G constitute the peripheral sector of the complex.

Its subcellular location is the cell membrane. The enzyme catalyses a quinone + NADH + 5 H(+)(in) = a quinol + NAD(+) + 4 H(+)(out). NDH-1 shuttles electrons from NADH, via FMN and iron-sulfur (Fe-S) centers, to quinones in the respiratory chain. The immediate electron acceptor for the enzyme in this species is believed to be a menaquinone. Couples the redox reaction to proton translocation (for every two electrons transferred, four hydrogen ions are translocated across the cytoplasmic membrane), and thus conserves the redox energy in a proton gradient. The chain is NADH-quinone oxidoreductase subunit C from Mycolicibacterium gilvum (strain PYR-GCK) (Mycobacterium gilvum (strain PYR-GCK)).